The following is a 93-amino-acid chain: AVLDMDIRKCMPCGPRNKGHCFGPNICCGEELGCYFGTSETLRCQEENFLPTPCESGRKPCGNNEGSCAASGICCSNEGCMVDSSCDQEVMFP.

Disulfide bonds link cysteine 10-cysteine 54, cysteine 13-cysteine 27, cysteine 21-cysteine 44, cysteine 28-cysteine 34, cysteine 61-cysteine 74, cysteine 68-cysteine 86, and cysteine 75-cysteine 80.

The protein belongs to the vasopressin/oxytocin family.

Its function is as follows. Neurophysin 1 specifically binds oxytocin. In Struthio camelus (Common ostrich), this protein is Neurophysin 1.